The primary structure comprises 707 residues: Translation initiation factor IF-2 (707 aa).

The span at 55–80 shows a compositional bias: basic and acidic residues; that stretch reads LAEKPKEEKQKDQKNHEQEAQDKEEK. The tract at residues 55–88 is disordered; sequence LAEKPKEEKQKDQKNHEQEAQDKEEKEIEEDSFY. The region spanning 209 to 378 is the tr-type G domain; sequence PRPPIVTVMG…LLVAEMEDLK (170 aa). Positions 218–225 are G1; that stretch reads GHVDHGKT. 218-225 serves as a coordination point for GTP; that stretch reads GHVDHGKT. The tract at residues 243–247 is G2; the sequence is GITQH. The segment at 264–267 is G3; it reads DTPG. GTP is bound by residues 264–268 and 318–321; these read DTPGH and NKID. Residues 318–321 are G4; the sequence is NKID. The tract at residues 354-356 is G5; it reads SAK.

Belongs to the TRAFAC class translation factor GTPase superfamily. Classic translation factor GTPase family. IF-2 subfamily.

It is found in the cytoplasm. In terms of biological role, one of the essential components for the initiation of protein synthesis. Protects formylmethionyl-tRNA from spontaneous hydrolysis and promotes its binding to the 30S ribosomal subunits. Also involved in the hydrolysis of GTP during the formation of the 70S ribosomal complex. This chain is Translation initiation factor IF-2, found in Caldanaerobacter subterraneus subsp. tengcongensis (strain DSM 15242 / JCM 11007 / NBRC 100824 / MB4) (Thermoanaerobacter tengcongensis).